The sequence spans 367 residues: Queuine tRNA-ribosyltransferase (367 aa).

Aspartate 92 acts as the Proton acceptor in catalysis. Substrate is bound by residues aspartate 92–phenylalanine 96, aspartate 146, glutamine 188, and glycine 215. The tract at residues glycine 246–aspartate 252 is RNA binding. Aspartate 265 (nucleophile) is an active-site residue. Positions 303, 305, 308, and 334 each coordinate Zn(2+).

This sequence belongs to the queuine tRNA-ribosyltransferase family. As to quaternary structure, homodimer. Within each dimer, one monomer is responsible for RNA recognition and catalysis, while the other monomer binds to the replacement base PreQ1. The cofactor is Zn(2+).

It catalyses the reaction 7-aminomethyl-7-carbaguanine + guanosine(34) in tRNA = 7-aminomethyl-7-carbaguanosine(34) in tRNA + guanine. The protein operates within tRNA modification; tRNA-queuosine biosynthesis. Catalyzes the base-exchange of a guanine (G) residue with the queuine precursor 7-aminomethyl-7-deazaguanine (PreQ1) at position 34 (anticodon wobble position) in tRNAs with GU(N) anticodons (tRNA-Asp, -Asn, -His and -Tyr). Catalysis occurs through a double-displacement mechanism. The nucleophile active site attacks the C1' of nucleotide 34 to detach the guanine base from the RNA, forming a covalent enzyme-RNA intermediate. The proton acceptor active site deprotonates the incoming PreQ1, allowing a nucleophilic attack on the C1' of the ribose to form the product. After dissociation, two additional enzymatic reactions on the tRNA convert PreQ1 to queuine (Q), resulting in the hypermodified nucleoside queuosine (7-(((4,5-cis-dihydroxy-2-cyclopenten-1-yl)amino)methyl)-7-deazaguanosine). This is Queuine tRNA-ribosyltransferase from Francisella tularensis subsp. novicida (strain U112).